The chain runs to 354 residues: Methylthioribose-1-phosphate isomerase (354 aa).

Substrate-binding positions include 58–60 (RGA), Arg101, and Gln204. Asp245 acts as the Proton donor in catalysis. Position 255–256 (255–256 (NK)) interacts with substrate.

Belongs to the eIF-2B alpha/beta/delta subunits family. MtnA subfamily.

The enzyme catalyses 5-(methylsulfanyl)-alpha-D-ribose 1-phosphate = 5-(methylsulfanyl)-D-ribulose 1-phosphate. The protein operates within amino-acid biosynthesis; L-methionine biosynthesis via salvage pathway; L-methionine from S-methyl-5-thio-alpha-D-ribose 1-phosphate: step 1/6. Catalyzes the interconversion of methylthioribose-1-phosphate (MTR-1-P) into methylthioribulose-1-phosphate (MTRu-1-P). The sequence is that of Methylthioribose-1-phosphate isomerase from Xanthomonas euvesicatoria pv. vesicatoria (strain 85-10) (Xanthomonas campestris pv. vesicatoria).